Here is a 558-residue protein sequence, read N- to C-terminus: Glucose-6-phosphate isomerase (558 aa).

At A2 the chain carries N-acetylalanine. K12 carries the N6-acetyllysine modification. Residue K34 is modified to N6-(2-hydroxyisobutyryl)lysine. S107 is modified (phosphoserine). T109 carries the post-translational modification Phosphothreonine. K142 carries the N6-acetyllysine modification. G159–S160 serves as a coordination point for D-glucose 6-phosphate. S185 bears the Phosphoserine; by CK2 mark. S210–T215 serves as a coordination point for D-glucose 6-phosphate. T250 is subject to Phosphothreonine. Residues Q354, E358, and H389 each coordinate D-glucose 6-phosphate. The Proton donor role is filled by E358. H389 is an active-site residue. K454 carries the post-translational modification N6-acetyllysine; alternate. N6-malonyllysine; alternate is present on K454. Position 454 is an N6-succinyllysine; alternate (K454). S455 is modified (phosphoserine). Position 519 (K519) interacts with D-glucose 6-phosphate. The active site involves K519.

This sequence belongs to the GPI family. As to quaternary structure, homodimer; in the catalytically active form. Monomer in the secreted form. Phosphorylation at Ser-185 by CK2 has been shown to decrease enzymatic activity and may contribute to secretion by a non-classical secretory pathway. In terms of processing, ISGylated.

It localises to the cytoplasm. Its subcellular location is the secreted. It carries out the reaction alpha-D-glucose 6-phosphate = beta-D-fructose 6-phosphate. Its pathway is carbohydrate degradation; glycolysis; D-glyceraldehyde 3-phosphate and glycerone phosphate from D-glucose: step 2/4. Strongly inhibited by erythrose 4-phosphate. In the cytoplasm, catalyzes the conversion of glucose-6-phosphate to fructose-6-phosphate, the second step in glycolysis, and the reverse reaction during gluconeogenesis. Besides it's role as a glycolytic enzyme, also acts as a secreted cytokine: acts as an angiogenic factor (AMF) that stimulates endothelial cell motility. Acts as a neurotrophic factor, neuroleukin, for spinal and sensory neurons. It is secreted by lectin-stimulated T-cells and induces immunoglobulin secretion. The protein is Glucose-6-phosphate isomerase of Homo sapiens (Human).